The primary structure comprises 957 residues: Glycine dehydrogenase (decarboxylating) (957 aa).

Residue Lys-708 is modified to N6-(pyridoxal phosphate)lysine.

This sequence belongs to the GcvP family. As to quaternary structure, the glycine cleavage system is composed of four proteins: P, T, L and H. Requires pyridoxal 5'-phosphate as cofactor.

It catalyses the reaction N(6)-[(R)-lipoyl]-L-lysyl-[glycine-cleavage complex H protein] + glycine + H(+) = N(6)-[(R)-S(8)-aminomethyldihydrolipoyl]-L-lysyl-[glycine-cleavage complex H protein] + CO2. Functionally, the glycine cleavage system catalyzes the degradation of glycine. The P protein binds the alpha-amino group of glycine through its pyridoxal phosphate cofactor; CO(2) is released and the remaining methylamine moiety is then transferred to the lipoamide cofactor of the H protein. The protein is Glycine dehydrogenase (decarboxylating) of Escherichia coli O7:K1 (strain IAI39 / ExPEC).